The sequence spans 1079 residues: Translation initiation factor IF-2 (1079 aa).

3 stretches are compositionally biased toward basic and acidic residues: residues 52–65 (VQAQRDGGARKEGN), 75–90 (RDGDRASARAEAKAPE), and 102–134 (APERAEEADKPAVAKPAKAPETEAHARARKEPQ). The disordered stretch occupies residues 52-488 (VQAQRDGGAR…RGKKDVRPAA (437 aa)). Low complexity predominate over residues 150 to 184 (APVAKVVEAAPAETPAPEAPAVKATVTAEAAPAKT). The span at 185-194 (VEPESERPQA) shows a compositional bias: basic and acidic residues. The span at 276-291 (AAVAQQQMQQQAAQQQ) shows a compositional bias: low complexity. Positions 306-327 (GGYRPEGQREGGYRPEGQREGG) are enriched in basic and acidic residues. 2 stretches are compositionally biased toward low complexity: residues 348-370 (EGGYRPGAPRPEGGYRPAGGPRP) and 380-398 (PGAPRPEGGYRPAGGAPRP). Residues 419-429 (PRPGGFGGAPG) show a composition bias toward gly residues. Residues 461–471 (PRGRSDDDVMR) show a composition bias toward basic and acidic residues. A compositionally biased stretch (basic residues) spans 473 to 482 (PRGRGKRGKK). The tr-type G domain occupies 578-745 (TRPPVVTIMG…LIAIQAEILE (168 aa)). Positions 587–594 (GHVDHGKT) are G1. 587 to 594 (GHVDHGKT) lines the GTP pocket. Residues 612 to 616 (GITQH) are G2. Residues 633–636 (DTPG) are G3. GTP contacts are provided by residues 633–637 (DTPGH) and 687–690 (NKMD). The interval 687-690 (NKMD) is G4. The G5 stretch occupies residues 723–725 (SAK).

The protein belongs to the TRAFAC class translation factor GTPase superfamily. Classic translation factor GTPase family. IF-2 subfamily.

It localises to the cytoplasm. In terms of biological role, one of the essential components for the initiation of protein synthesis. Protects formylmethionyl-tRNA from spontaneous hydrolysis and promotes its binding to the 30S ribosomal subunits. Also involved in the hydrolysis of GTP during the formation of the 70S ribosomal complex. This chain is Translation initiation factor IF-2, found in Nitratidesulfovibrio vulgaris (strain DP4) (Desulfovibrio vulgaris).